The sequence spans 153 residues: 3-hydroxyacyl-[acyl-carrier-protein] dehydratase FabZ (153 aa).

Histidine 54 is a catalytic residue.

This sequence belongs to the thioester dehydratase family. FabZ subfamily.

It localises to the cytoplasm. The catalysed reaction is a (3R)-hydroxyacyl-[ACP] = a (2E)-enoyl-[ACP] + H2O. Functionally, involved in unsaturated fatty acids biosynthesis. Catalyzes the dehydration of short chain beta-hydroxyacyl-ACPs and long chain saturated and unsaturated beta-hydroxyacyl-ACPs. This chain is 3-hydroxyacyl-[acyl-carrier-protein] dehydratase FabZ, found in Shewanella pealeana (strain ATCC 700345 / ANG-SQ1).